Reading from the N-terminus, the 454-residue chain is Anthocyanidin 3-O-galactosyltransferase 3GT6 (454 aa).

Positions 1–21 (MTNSSKGRHVAVLPFPFSTHA) are cleaved as a signal peptide. Positions 18 and 20 each coordinate an anthocyanidin. H20 functions as the Proton acceptor in the catalytic mechanism. D117 acts as the Charge relay in catalysis. An an anthocyanidin-binding site is contributed by H148. 7 residues coordinate UDP-alpha-D-glucose: A331, Q333, H348, W351, N352, S353, and E356. G371 is a binding site for an anthocyanidin. Position 372 (D372) interacts with UDP-alpha-D-glucose. The N-linked (GlcNAc...) asparagine glycan is linked to N441.

It belongs to the UDP-glycosyltransferase family. As to quaternary structure, monomer. Mostly expressed in leaves and flowers and, to a lower extent, in roots. In flowers, mainly observed in petals, stamens and scapes, and at lower levels in pistils and toruses.

It carries out the reaction cyanidin + UDP-alpha-D-galactose = cyanidin 3-O-beta-D-galactoside + UDP + H(+). The enzyme catalyses cyanidin + UDP-alpha-D-glucose = cyanidin 3-O-beta-D-glucoside + UDP + H(+). The catalysed reaction is delphinidin + UDP-alpha-D-glucose = delphinidin 3-O-beta-D-glucoside + UDP. It catalyses the reaction peonidin + UDP-alpha-D-glucose = peonidin 3-O-beta-D-glucoside + UDP. It carries out the reaction pelargonidin + UDP-alpha-D-glucose = pelargonidin 3-O-beta-D-glucoside + UDP. The enzyme catalyses delphinidin + UDP-alpha-D-galactose = delphinidin 3-O-beta-D-galactoside + UDP + H(+). The catalysed reaction is pelargonidin + UDP-alpha-D-galactose = pelargonidin 3-O-beta-D-galactoside betaine + UDP. It catalyses the reaction peonidin + UDP-alpha-D-galactose = peonidin 3-O-beta-D-galactoside + UDP. It carries out the reaction petunidin + UDP-alpha-D-galactose = petunidin 3-O-beta-D-galactoside + UDP. The enzyme catalyses petunidin + UDP-alpha-D-glucose = petunidin 3-O-beta-D-glucoside + UDP. The catalysed reaction is an anthocyanidin + UDP-alpha-D-glucose + H(+) = an anthocyanidin 3-O-beta-D-glucoside + UDP. It catalyses the reaction an anthocyanidin + UDP-alpha-D-galactose = an anthocyanidin 3-O-beta-D-galactoside + UDP. The protein operates within pigment biosynthesis; anthocyanin biosynthesis. Functionally, flavonoid 3-O-glycosyltransferase involved in the biosynthesis of anthocyanins conferring flower red/pink colors, mainly anthocyanidin 3-O-glycosides. Catalyzes the addition of UDP-sugar to the 3-OH of anthocyanidin, with a preference for UDP-galactose (UDP-Gal) as sugar donor and cyanidin as substrate; able to use delphinidin, pelargonidin, peonidin and petunidin as substrates in the presence of UDP-Gal, but barely active on malvidin. Can also use UDP-glucose (UDP-Glu) as sugar donor with cyanidin, delphinidin, pelargonidin, peonidin and petunidin as substrates, but not active on malvidin. The sequence is that of Anthocyanidin 3-O-galactosyltransferase 3GT6 from Rhododendron delavayi (Rhododendron).